The sequence spans 468 residues: mRNA cleavage and polyadenylation factor CLP1 (468 aa).

Residues 1-22 (MLSLPGLNLAPQPAEPLNAPTS) form a disordered region. ATP is bound by residues Glu35, Lys74, and 138 to 143 (HSGKTS).

The protein belongs to the Clp1 family. Clp1 subfamily. As to quaternary structure, component of a pre-mRNA cleavage factor complex. Interacts directly with PCF11.

It is found in the nucleus. Its function is as follows. Required for endonucleolytic cleavage during polyadenylation-dependent pre-mRNA 3'-end formation. In Phaeosphaeria nodorum (strain SN15 / ATCC MYA-4574 / FGSC 10173) (Glume blotch fungus), this protein is mRNA cleavage and polyadenylation factor CLP1.